The chain runs to 609 residues: Phosphoenolpyruvate carboxykinase [GTP] (609 aa).

Substrate is bound by residues Arg-81 and 220–222; that span reads YGG. Residues Lys-229 and His-249 each coordinate Mn(2+). Ser-271 is a binding site for substrate. Residue 272–277 coordinates GTP; the sequence is ACGKTN. Cys-273 is an active-site residue. Mn(2+) is bound at residue Asp-296. 387-389 lines the substrate pocket; it reads NSR. Residues Arg-389, Arg-420, and 515-518 contribute to the GTP site; that span reads FGEN.

The protein belongs to the phosphoenolpyruvate carboxykinase [GTP] family. As to quaternary structure, monomer. The cofactor is Mn(2+).

It localises to the cytoplasm. It catalyses the reaction oxaloacetate + GTP = phosphoenolpyruvate + GDP + CO2. It participates in carbohydrate biosynthesis; gluconeogenesis. Catalyzes the conversion of oxaloacetate (OAA) to phosphoenolpyruvate (PEP), the rate-limiting step in the metabolic pathway that produces glucose from lactate and other precursors derived from the citric acid cycle. This chain is Phosphoenolpyruvate carboxykinase [GTP], found in Mycobacterium marinum (strain ATCC BAA-535 / M).